The primary structure comprises 523 residues: Cyclin-dependent kinase 17 (523 aa).

A Phosphoserine modification is found at S9. Positions 31 to 55 (IEESSSKDNEPIVKNGRPPTSHSMH) are disordered. 3 positions are modified to phosphoserine: S80, S92, and S105. Residues 103 to 123 (MGSDGESDQASGTSSDEVQSP) form a disordered region. Positions 110–123 (DQASGTSSDEVQSP) are enriched in polar residues. A phosphoserine mark is found at S137, S146, S165, and S180. One can recognise a Protein kinase domain in the interval 192-473 (YIKLEKLGEG…AEEAMKHVYF (282 aa)). ATP is bound by residues 198-206 (LGEGTYATV) and K221. The active-site Proton acceptor is D313.

Belongs to the protein kinase superfamily. CMGC Ser/Thr protein kinase family. CDC2/CDKX subfamily. In terms of assembly, found in a complex containing CABLES1, CDK16 and TDRD7. Interacts with TDRD7. As to expression, brain specific. Within the brain it is concentrated in the neuronal layers of the hippocampus and olfactory bulb, which mostly consist of post-mitotic neurons.

It carries out the reaction L-seryl-[protein] + ATP = O-phospho-L-seryl-[protein] + ADP + H(+). It catalyses the reaction L-threonyl-[protein] + ATP = O-phospho-L-threonyl-[protein] + ADP + H(+). In terms of biological role, may play a role in terminally differentiated neurons. Has a Ser/Thr-phosphorylating activity for histone H1. The protein is Cyclin-dependent kinase 17 (Cdk17) of Rattus norvegicus (Rat).